A 204-amino-acid chain; its full sequence is ATP-dependent Clp protease proteolytic subunit (204 aa).

Ser-102 (nucleophile) is an active-site residue. His-127 is an active-site residue.

It belongs to the peptidase S14 family. As to quaternary structure, fourteen ClpP subunits assemble into 2 heptameric rings which stack back to back to give a disk-like structure with a central cavity, resembling the structure of eukaryotic proteasomes.

The protein resides in the cytoplasm. The catalysed reaction is Hydrolysis of proteins to small peptides in the presence of ATP and magnesium. alpha-casein is the usual test substrate. In the absence of ATP, only oligopeptides shorter than five residues are hydrolyzed (such as succinyl-Leu-Tyr-|-NHMec, and Leu-Tyr-Leu-|-Tyr-Trp, in which cleavage of the -Tyr-|-Leu- and -Tyr-|-Trp bonds also occurs).. In terms of biological role, cleaves peptides in various proteins in a process that requires ATP hydrolysis. Has a chymotrypsin-like activity. Plays a major role in the degradation of misfolded proteins. The chain is ATP-dependent Clp protease proteolytic subunit from Neisseria meningitidis serogroup A / serotype 4A (strain DSM 15465 / Z2491).